A 325-amino-acid chain; its full sequence is Glutaminase (325 aa).

Serine 76, asparagine 125, glutamate 169, asparagine 176, tyrosine 200, tyrosine 252, and valine 270 together coordinate substrate.

It belongs to the glutaminase family. Homotetramer.

It catalyses the reaction L-glutamine + H2O = L-glutamate + NH4(+). The protein is Glutaminase of Clavibacter michiganensis subsp. michiganensis (strain NCPPB 382).